Here is a 132-residue protein sequence, read N- to C-terminus: Small ribosomal subunit protein uS8 (132 aa).

Belongs to the universal ribosomal protein uS8 family. In terms of assembly, part of the 30S ribosomal subunit. Contacts proteins S5 and S12.

Its function is as follows. One of the primary rRNA binding proteins, it binds directly to 16S rRNA central domain where it helps coordinate assembly of the platform of the 30S subunit. The sequence is that of Small ribosomal subunit protein uS8 from Christiangramia forsetii (strain DSM 17595 / CGMCC 1.15422 / KT0803) (Gramella forsetii).